The sequence spans 427 residues: MTYKEYRDKVLNFIEEHEKWRSHTINLIASENITSPSVNRAVASGFMHKYAEGWPKQRYYQGCKYVDEVELIGVELFTKLFKSDYADLRPISGTNANQAVFFGLGQPGDKVIVLHTSHGGHISHMPFGAAGMRGLEVHTWPFDFESFNIDVDKAEKMIRELEPKIVMFGGSLFPFPHPVKELAPVAKEVGAFVVYDAAHVLGLIAGGEFQDPLREGADIMTASTHKTFPGPQGGVILYKKFADDETIAKLQWAIFPGVVSNHHLHHMAGKVITAAEMLEYGEAYAKQIVKNAKALAEALAEEGFKVIGEDQGYTKSHQVIVDVSDLHPAGGGWAAPLLEEAGIILNKNLLPWDPLEKVNEPSGLRIGVQEMTRVGMMEDEMREIAHFIKRVLIDKEDPKKVRKDVYYFRLEYQKVYYSFDYGLPMKE.

Residue 120–122 (GHI) participates in (6S)-5,6,7,8-tetrahydrofolate binding. K226 is subject to N6-(pyridoxal phosphate)lysine.

This sequence belongs to the SHMT family. Homodimer. Pyridoxal 5'-phosphate is required as a cofactor.

Its subcellular location is the cytoplasm. It functions in the pathway amino-acid biosynthesis; glycine biosynthesis; glycine from L-serine: step 1/1. Functionally, catalyzes the reversible interconversion of serine and glycine with a modified folate serving as the one-carbon carrier. Also exhibits a pteridine-independent aldolase activity toward beta-hydroxyamino acids, producing glycine and aldehydes, via a retro-aldol mechanism. In Pyrococcus furiosus (strain ATCC 43587 / DSM 3638 / JCM 8422 / Vc1), this protein is Serine hydroxymethyltransferase.